Here is a 336-residue protein sequence, read N- to C-terminus: MSEQNTIINSEEIKENEKIESETEEPITYLDLTGQPHTSIGDSYNIPETLLDLDLTNCKITKIENINHLKNLKKLCFRQNLIEKIENIDQLKELESLDLYDNKLQVIENIKDFQSLTYLDLSFNEIRIVENLSIKDIPKIKELYLANNKITKIENLQELVPIKNLELGSNRLREIENLENLVNIETLWLGRNKITEIKGINHLSHLRILSLQSNRLTEIGVKGLVGLNCLEELYLSHNGITDIDGLQSLKQLRTLDISANKIKTLVGLNELPDLDEIWCNDNLVDSMDNIEQQVTKSIKCLYFERNPVATHVQYRRMFINMFPQLKQLDATMVKRN.

The segment covering 1–10 has biased composition (low complexity); the sequence is MSEQNTIINS. Residues 1 to 24 are disordered; the sequence is MSEQNTIINSEEIKENEKIESETE. The segment covering 11–21 has biased composition (basic and acidic residues); the sequence is EEIKENEKIES. LRR repeat units lie at residues 26 to 47, 49 to 70, 71 to 92, 93 to 114, 115 to 136, 139 to 160, 161 to 182, 183 to 204, 205 to 225, 229 to 250, 251 to 272, and 273 to 294; these read PITYLDLTGQPHTSIGDSYNIP, TLLDLDLTNCKITKIENINHLK, NLKKLCFRQNLIEKIENIDQLK, ELESLDLYDNKLQVIENIKDFQ, SLTYLDLSFNEIRIVENLSIKD, KIKELYLANNKITKIENLQELV, PIKNLELGSNRLREIENLENLV, NIETLWLGRNKITEIKGINHLS, HLRILSLQSNRLTEIGVKGLV, CLEELYLSHNGITDIDGLQSLK, QLRTLDISANKIKTLVGLNELP, and DLDEIWCNDNLVDSMDNIEQQV. Positions 306–336 constitute an LRRCT domain; that stretch reads NPVATHVQYRRMFINMFPQLKQLDATMVKRN.

It belongs to the SDS22 family.

It is found in the nucleus. Regulatory subunit of protein phosphatase 1. This chain is Protein phosphatase 1 regulatory subunit pprA (pprA), found in Dictyostelium discoideum (Social amoeba).